The following is a 362-amino-acid chain: Caspase activity and apoptosis inhibitor 1 (362 aa).

A compositionally biased stretch (basic residues) spans Met-1–Arg-14. 2 disordered regions span residues Met-1–Gly-44 and Thr-65–Gln-101. Residues Ala-19–Val-32 are compositionally biased toward low complexity. Composition is skewed to gly residues over residues Gly-33–Gly-44 and Thr-65–Trp-74. Ser-89 carries the phosphoserine modification. At Thr-90 the chain carries Phosphothreonine. Residue Lys-105 forms a Glycyl lysine isopeptide (Lys-Gly) (interchain with G-Cter in SUMO2) linkage. 2 positions are modified to phosphoserine: Ser-121 and Ser-204. Disordered stretches follow at residues Ser-226–Glu-251, Gly-269–Gln-291, and Leu-309–Pro-332. Residues Arg-235–Glu-251 are compositionally biased toward basic and acidic residues. Low complexity predominate over residues Glu-273–Glu-282. A coiled-coil region spans residues Glu-282–Ser-312. Ser-313 carries the post-translational modification Phosphoserine.

Its function is as follows. Anti-apoptotic protein that modulates a caspase-10 dependent mitochondrial caspase-3/9 feedback amplification loop. The protein is Caspase activity and apoptosis inhibitor 1 (CAAP1) of Bos taurus (Bovine).